The sequence spans 281 residues: Probable endonuclease 4 (281 aa).

9 residues coordinate Zn(2+): His-69, His-109, Glu-145, Asp-179, His-182, His-216, Asp-229, His-231, and Glu-261.

It belongs to the AP endonuclease 2 family. Zn(2+) is required as a cofactor.

The enzyme catalyses Endonucleolytic cleavage to 5'-phosphooligonucleotide end-products.. In terms of biological role, endonuclease IV plays a role in DNA repair. It cleaves phosphodiester bonds at apurinic or apyrimidinic (AP) sites, generating a 3'-hydroxyl group and a 5'-terminal sugar phosphate. The sequence is that of Probable endonuclease 4 from Yersinia enterocolitica serotype O:8 / biotype 1B (strain NCTC 13174 / 8081).